A 742-amino-acid chain; its full sequence is Phosphoribosylformylglycinamidine synthase subunit PurL (742 aa).

H54 is an active-site residue. The ATP site is built by Y57 and K96. E98 contacts Mg(2+). Substrate contacts are provided by residues S99–H102 and R121. The active-site Proton acceptor is the H100. D122 provides a ligand contact to Mg(2+). Q245 contributes to the substrate binding site. D273 is a Mg(2+) binding site. A substrate-binding site is contributed by E317–Q319. ATP-binding residues include D500 and G537. N538 is a Mg(2+) binding site. S540 serves as a coordination point for substrate.

The protein belongs to the FGAMS family. Monomer. Part of the FGAM synthase complex composed of 1 PurL, 1 PurQ and 2 PurS subunits.

The protein localises to the cytoplasm. It carries out the reaction N(2)-formyl-N(1)-(5-phospho-beta-D-ribosyl)glycinamide + L-glutamine + ATP + H2O = 2-formamido-N(1)-(5-O-phospho-beta-D-ribosyl)acetamidine + L-glutamate + ADP + phosphate + H(+). It functions in the pathway purine metabolism; IMP biosynthesis via de novo pathway; 5-amino-1-(5-phospho-D-ribosyl)imidazole from N(2)-formyl-N(1)-(5-phospho-D-ribosyl)glycinamide: step 1/2. In terms of biological role, part of the phosphoribosylformylglycinamidine synthase complex involved in the purines biosynthetic pathway. Catalyzes the ATP-dependent conversion of formylglycinamide ribonucleotide (FGAR) and glutamine to yield formylglycinamidine ribonucleotide (FGAM) and glutamate. The FGAM synthase complex is composed of three subunits. PurQ produces an ammonia molecule by converting glutamine to glutamate. PurL transfers the ammonia molecule to FGAR to form FGAM in an ATP-dependent manner. PurS interacts with PurQ and PurL and is thought to assist in the transfer of the ammonia molecule from PurQ to PurL. The protein is Phosphoribosylformylglycinamidine synthase subunit PurL of Geobacillus kaustophilus (strain HTA426).